A 77-amino-acid chain; its full sequence is QXPSTAELCKINSNACSVPFSXIPCQKXFLAACDRHDTCYHCGKHFGFKQDDCDDAFFRDMTALCAHGTDDEGXCPX.

Glutamine 1 carries the post-translational modification Pyrrolidone carboxylic acid. Residue histidine 36 is part of the active site.

Heterodimer of an alpha and a beta chains; probably disulfide-linked. It depends on Ca(2+) as a cofactor. Expressed by the venom duct.

It is found in the secreted. The catalysed reaction is a 1,2-diacyl-sn-glycero-3-phosphocholine + H2O = a 1-acyl-sn-glycero-3-phosphocholine + a fatty acid + H(+). Inhibited by linoleoyl amide and MG14. Its function is as follows. Heterodimer: conodipine-M catalyzes the calcium-dependent hydrolysis of the 2-acyl groups in 3-sn-phosphoglycerides. This activity may be supported by the alpha chain. Conodipine-M inhibits the binding of isradipine (a ligand specific for L-type calcium channel) to L-type calcium channels. The protein is Conodipine-M alpha chain of Conus magus (Magical cone).